The following is a 395-amino-acid chain: Type III polyketide synthase A (395 aa).

Residue 63 to 70 coordinates CoA; the sequence is KLEHLCKT. Catalysis depends on Cys172, which acts as the Nucleophile. 224 to 225 contributes to the substrate binding site; that stretch reads GD. CoA is bound by residues Leu274, 314 to 317, and Ala317; that span reads GGPA.

The protein belongs to the thiolase-like superfamily. Chalcone/stilbene synthases family. Homodimer. Interacts with 4CLL1/ACOS5 and TKPR1. Expressed in flowers and flower buds (at protein level), and, at very low levels, in roots, seedlings, leaves and stems. Mostly confined to anther tapetal cells.

It is found in the endoplasmic reticulum. The protein operates within secondary metabolite biosynthesis; flavonoid biosynthesis. Its function is as follows. Plant type III polyketide synthases (PKSs) that catalyzes the condensation of malonyl-CoA units with various CoA ester starter molecules to generate a diverse array of natural products including long-chain alkyl alpha-pyrones. Accepts up to C(20) chain-length fatty acyl CoAs as starter substrates, and carries out sequential condensations with malonyl-CoA to produce triketide and tetraketide alpha-pyrones, potential sporopollenin precursors. Favorite substrates for are midchain- and v-hydroxylated fatty acyl-CoAs (e.g. 12-hydroxyoctadecanoyl-CoA and 16-hydroxyhexadecanoyl-CoA). Required for pollen development and sporopollenin biosynthesis, the major constituent of exine in the outer pollen wall. In vitro, can use 4-coumaroyl-coenzyme A as substrate to produce bis-noryangonin and fatty acyl-coenzyme A as substrate to produce medium-chain alkyl pyrones. May play a role in both the synthesis of pollen fatty acids and phenolics found in exine. The sequence is that of Type III polyketide synthase A from Arabidopsis thaliana (Mouse-ear cress).